The primary structure comprises 319 residues: NADH-ubiquinone oxidoreductase chain 1 (319 aa).

8 consecutive transmembrane segments (helical) span residues 5 to 25 (TINS…LTLM), 72 to 92 (LLIS…TPIP), 102 to 122 (LGLL…LWAG), 146 to 166 (VTLG…TMQL), 173 to 193 (FTWL…STLA), 225 to 245 (FFLT…ILFI), 254 to 274 (ELFL…FLWI), and 295 to 315 (LPLT…TSGI).

Belongs to the complex I subunit 1 family.

The protein localises to the mitochondrion inner membrane. The enzyme catalyses a ubiquinone + NADH + 5 H(+)(in) = a ubiquinol + NAD(+) + 4 H(+)(out). Its function is as follows. Core subunit of the mitochondrial membrane respiratory chain NADH dehydrogenase (Complex I) that is believed to belong to the minimal assembly required for catalysis. Complex I functions in the transfer of electrons from NADH to the respiratory chain. The immediate electron acceptor for the enzyme is believed to be ubiquinone. The sequence is that of NADH-ubiquinone oxidoreductase chain 1 (MT-ND1) from Varanus flavescens (Yellow monitor).